A 394-amino-acid polypeptide reads, in one-letter code: 1-deoxy-D-xylulose 5-phosphate reductoisomerase (394 aa).

Residues T13, G14, T15, I16, and N125 each coordinate NADPH. K126 provides a ligand contact to 1-deoxy-D-xylulose 5-phosphate. E127 contacts NADPH. Residue D151 coordinates Mn(2+). The 1-deoxy-D-xylulose 5-phosphate site is built by S152, E153, S182, and H205. E153 contacts Mn(2+). G211 lines the NADPH pocket. 1-deoxy-D-xylulose 5-phosphate-binding residues include S218, N223, K224, and E227. Residue E227 participates in Mn(2+) binding.

Belongs to the DXR family. Requires Mg(2+) as cofactor. Mn(2+) is required as a cofactor.

It carries out the reaction 2-C-methyl-D-erythritol 4-phosphate + NADP(+) = 1-deoxy-D-xylulose 5-phosphate + NADPH + H(+). The protein operates within isoprenoid biosynthesis; isopentenyl diphosphate biosynthesis via DXP pathway; isopentenyl diphosphate from 1-deoxy-D-xylulose 5-phosphate: step 1/6. Functionally, catalyzes the NADPH-dependent rearrangement and reduction of 1-deoxy-D-xylulose-5-phosphate (DXP) to 2-C-methyl-D-erythritol 4-phosphate (MEP). The polypeptide is 1-deoxy-D-xylulose 5-phosphate reductoisomerase (Methylobacillus flagellatus (strain ATCC 51484 / DSM 6875 / VKM B-1610 / KT)).